The following is a 1016-amino-acid chain: FHIP family protein Bm1_18400 (1016 aa).

Disordered regions lie at residues 586-608 (DSLRQHTPPPELGEQESSSRSSF) and 757-778 (SDGFKSDTNNDNDDEDPAPLGK).

This sequence belongs to the FHIP family.

The polypeptide is FHIP family protein Bm1_18400 (Brugia malayi (Filarial nematode worm)).